The sequence spans 495 residues: L-arabinose isomerase (495 aa).

Residues glutamate 305, glutamate 332, histidine 349, and histidine 448 each coordinate Mn(2+).

It belongs to the arabinose isomerase family. Mn(2+) is required as a cofactor.

It carries out the reaction beta-L-arabinopyranose = L-ribulose. The protein operates within carbohydrate degradation; L-arabinose degradation via L-ribulose; D-xylulose 5-phosphate from L-arabinose (bacterial route): step 1/3. In terms of biological role, catalyzes the conversion of L-arabinose to L-ribulose. The chain is L-arabinose isomerase from Actinobacillus succinogenes (strain ATCC 55618 / DSM 22257 / CCUG 43843 / 130Z).